Consider the following 190-residue polypeptide: MATIGYIRVSTIDQNIDLQRNALTSANCDRIFEDRISGKIANRPGLKRALKYVNKGDTLVVWKLDRLGRSVKNLVALISELHERGAHFHSLTDSIDTSSAMGRFFFHVMSALAEMERELIVERTLAGLAAARAQGRLGGRPRAINKHEQEQISRLLEKGHPRQQLAIIFGIGVSTLYRYFPASRIKKRMN.

Residues 2-135 (ATIGYIRVST…AGLAAARAQG (134 aa)) form the Resolvase/invertase-type recombinase catalytic domain. Catalysis depends on Ser10, which acts as the O-(5'-phospho-DNA)-serine intermediate. A DNA-binding region (H-T-H motif) is located at residues 162-181 (RQQLAIIFGIGVSTLYRYFP).

The protein belongs to the site-specific recombinase resolvase family.

In terms of biological role, a DNA fragment of approximately 900 base pairs, adjacent to the fljB (H2) gene, which specifies the synthesis of phase-2 flagellin, can exist in either orientation with respect to fljB. The orientation of the inversion region controls expression of fljB. The hin gene occupies about two-thirds of the inversion region; it is required for the inversion of the fljB controlling region. The chain is DNA-invertase hin (hin) from Salmonella typhimurium (strain LT2 / SGSC1412 / ATCC 700720).